Reading from the N-terminus, the 355-residue chain is 3-dehydroquinate synthase (355 aa).

Residues Glu71–Lys76, Gly105–Asp109, Thr129–Ser130, Lys142, and Lys151 contribute to the NAD(+) site. Residues Glu184, His246, and His263 each contribute to the Zn(2+) site.

Belongs to the sugar phosphate cyclases superfamily. Dehydroquinate synthase family. Co(2+) serves as cofactor. The cofactor is Zn(2+). Requires NAD(+) as cofactor.

It localises to the cytoplasm. It catalyses the reaction 7-phospho-2-dehydro-3-deoxy-D-arabino-heptonate = 3-dehydroquinate + phosphate. The protein operates within metabolic intermediate biosynthesis; chorismate biosynthesis; chorismate from D-erythrose 4-phosphate and phosphoenolpyruvate: step 2/7. Catalyzes the conversion of 3-deoxy-D-arabino-heptulosonate 7-phosphate (DAHP) to dehydroquinate (DHQ). The chain is 3-dehydroquinate synthase from Streptococcus thermophilus (strain CNRZ 1066).